The following is a 450-amino-acid chain: Tubulin alpha chain, testis-specific (450 aa).

Positions 1-4 (MREC) match the MREC motif motif. Position 11 (Gln11) interacts with GTP. Lys40 carries the N6-acetyllysine modification. GTP contacts are provided by Glu71, Ser140, Gly144, Thr145, Thr179, Asn206, and Asn228. Glu71 is a Mg(2+) binding site. The active site involves Glu254.

The protein belongs to the tubulin family. As to quaternary structure, dimer of alpha and beta chains. A typical microtubule is a hollow water-filled tube with an outer diameter of 25 nm and an inner diameter of 15 nM. Alpha-beta heterodimers associate head-to-tail to form protofilaments running lengthwise along the microtubule wall with the beta-tubulin subunit facing the microtubule plus end conferring a structural polarity. Microtubules usually have 13 protofilaments but different protofilament numbers can be found in some organisms and specialized cells. Mg(2+) serves as cofactor. Post-translationally, some glutamate residues at the C-terminus are polyglycylated, resulting in polyglycine chains on the gamma-carboxyl group. Glycylation is mainly limited to tubulin incorporated into axonemes (cilia and flagella) whereas glutamylation is prevalent in neuronal cells, centrioles, axonemes, and the mitotic spindle. Both modifications can coexist on the same protein on adjacent residues, and lowering polyglycylation levels increases polyglutamylation, and reciprocally. The precise function of polyglycylation is still unclear. In terms of processing, some glutamate residues at the C-terminus are polyglutamylated, resulting in polyglutamate chains on the gamma-carboxyl group. Polyglutamylation plays a key role in microtubule severing by spastin (SPAST). SPAST preferentially recognizes and acts on microtubules decorated with short polyglutamate tails: severing activity by SPAST increases as the number of glutamates per tubulin rises from one to eight, but decreases beyond this glutamylation threshold. Acetylation of alpha chains at Lys-40 is located inside the microtubule lumen. This modification has been correlated with increased microtubule stability, intracellular transport and ciliary assembly. Post-translationally, undergoes a tyrosination/detyrosination cycle, the cyclic removal and re-addition of a C-terminal tyrosine residue by the enzymes tubulin tyrosine carboxypeptidase (MATCAP, VASH1 or VASH2) and tubulin tyrosine ligase (TTL), respectively. In terms of processing, tyrosination promotes microtubule interaction with CAP-Gly microtubule plus-end tracking proteins. Tyrosinated tubulins regulate the initiation of dynein-driven motility. Detyrosination is involved in metaphase plate congression by guiding chromosomes during mitosis. Detyrosination increases microtubules-dependent mechanotransduction in dystrophic cardiac and skeletal muscle. In cardiomyocytes, detyrosinated microtubules are required to resist to contractile compression during contraction. In terms of tissue distribution, testis specific.

Its subcellular location is the cytoplasm. It localises to the cytoskeleton. It catalyses the reaction GTP + H2O = GDP + phosphate + H(+). Tubulin is the major constituent of microtubules, a cylinder consisting of laterally associated linear protofilaments composed of alpha- and beta-tubulin heterodimers. Microtubules grow by the addition of GTP-tubulin dimers to the microtubule end, where a stabilizing cap forms. Below the cap, tubulin dimers are in GDP-bound state, owing to GTPase activity of alpha-tubulin. In Oncorhynchus mykiss (Rainbow trout), this protein is Tubulin alpha chain, testis-specific.